A 308-amino-acid polypeptide reads, in one-letter code: Aspartate carbamoyltransferase catalytic subunit (308 aa).

Positions 55 and 56 each coordinate carbamoyl phosphate. Lys83 is an L-aspartate binding site. 3 residues coordinate carbamoyl phosphate: Arg105, His133, and Gln136. The L-aspartate site is built by Arg166 and Arg223. Positions 264 and 265 each coordinate carbamoyl phosphate.

Belongs to the aspartate/ornithine carbamoyltransferase superfamily. ATCase family. As to quaternary structure, heterododecamer (2C3:3R2) of six catalytic PyrB chains organized as two trimers (C3), and six regulatory PyrI chains organized as three dimers (R2).

It carries out the reaction carbamoyl phosphate + L-aspartate = N-carbamoyl-L-aspartate + phosphate + H(+). The protein operates within pyrimidine metabolism; UMP biosynthesis via de novo pathway; (S)-dihydroorotate from bicarbonate: step 2/3. Functionally, catalyzes the condensation of carbamoyl phosphate and aspartate to form carbamoyl aspartate and inorganic phosphate, the committed step in the de novo pyrimidine nucleotide biosynthesis pathway. The polypeptide is Aspartate carbamoyltransferase catalytic subunit (Salinispora arenicola (strain CNS-205)).